The chain runs to 201 residues: MKIIGLTGGMAAGKSTVAALFRREGVPVFDADACVRALQGERGKALPLIGQAFPGTVVASRLDRAALREAVRGRPEALQRLEAIMHPLVRVERERFLKQCRARHEPFCVLDIPLLMEIGEDRRCDVVMVAEAPMGTRLARIRQRGRSGGRMSLADAKGLLARQMSDHERRRRADIVIRTGLSRGQAVRQVHALLHRLREAS.

A DPCK domain is found at 3–201; sequence IIGLTGGMAA…ALLHRLREAS (199 aa). 11 to 16 is a binding site for ATP; sequence AAGKST.

It belongs to the CoaE family.

Its subcellular location is the cytoplasm. It carries out the reaction 3'-dephospho-CoA + ATP = ADP + CoA + H(+). It participates in cofactor biosynthesis; coenzyme A biosynthesis; CoA from (R)-pantothenate: step 5/5. In terms of biological role, catalyzes the phosphorylation of the 3'-hydroxyl group of dephosphocoenzyme A to form coenzyme A. In Gluconobacter oxydans (strain 621H) (Gluconobacter suboxydans), this protein is Dephospho-CoA kinase.